The sequence spans 150 residues: Aspartate 1-decarboxylase 2 (150 aa).

Ser24 (schiff-base intermediate with substrate; via pyruvic acid) is an active-site residue. Position 24 is a pyruvic acid (Ser) (Ser24). Thr56 provides a ligand contact to substrate. The Proton donor role is filled by Tyr57. Residue 72 to 74 coordinates substrate; the sequence is GAA.

This sequence belongs to the PanD family. As to quaternary structure, heterooctamer of four alpha and four beta subunits. The cofactor is pyruvate. Is synthesized initially as an inactive proenzyme, which is activated by self-cleavage at a specific serine bond to produce a beta-subunit with a hydroxyl group at its C-terminus and an alpha-subunit with a pyruvoyl group at its N-terminus.

It is found in the cytoplasm. The enzyme catalyses L-aspartate + H(+) = beta-alanine + CO2. It participates in cofactor biosynthesis; (R)-pantothenate biosynthesis; beta-alanine from L-aspartate: step 1/1. Functionally, catalyzes the pyruvoyl-dependent decarboxylation of aspartate to produce beta-alanine. This is Aspartate 1-decarboxylase 2 from Mesorhizobium japonicum (strain LMG 29417 / CECT 9101 / MAFF 303099) (Mesorhizobium loti (strain MAFF 303099)).